The sequence spans 396 residues: Squamosa promoter-binding-like protein 10 (396 aa).

Residues 74–104 form a disordered region; it reads QSTSINSSSPEDKRCNLASQSSPGDSSSNID. The segment covering 90–104 has biased composition (polar residues); that stretch reads LASQSSPGDSSSNID. The segment at 173 to 250 adopts an SBP-type zinc-finger fold; sequence VPRCQIDGCE…SHHNARRRKP (78 aa). 8 residues coordinate Zn(2+): Cys-176, Cys-181, Cys-198, His-201, Cys-217, Cys-220, His-224, and Cys-236. Positions 233 to 249 match the Bipartite nuclear localization signal motif; the sequence is KRSCRKRLSHHNARRRK.

The cofactor is Zn(2+).

Its subcellular location is the nucleus. Trans-acting factor that binds specifically to the consensus nucleotide sequence 5'-TNCGTACAA-3'. The protein is Squamosa promoter-binding-like protein 10 (SPL10) of Arabidopsis thaliana (Mouse-ear cress).